Consider the following 685-residue polypeptide: Protein arginine N-methyltransferase 7 (685 aa).

2 consecutive SAM-dependent MTase PRMT-type domains span residues 14–355 (QATW…YSLW) and 364–685 (AESI…LKSI).

This sequence belongs to the class I-like SAM-binding methyltransferase superfamily. Protein arginine N-methyltransferase family. PRMT7 subfamily.

Functionally, essential arginine methyltransferase that can both catalyze the formation of omega-N monomethylarginine (MMA) and symmetrical dimethylarginine (sDMA). Specifically mediates the symmetrical dimethylation of arginine residues in the small nuclear ribonucleoproteins SmD1 and SmD3. The chain is Protein arginine N-methyltransferase 7 (Art7) from Drosophila willistoni (Fruit fly).